Here is a 391-residue protein sequence, read N- to C-terminus: MDQFIKQDETGDLIETGMNVANHFLSTPIQGTNSLSKASILPGVAPVLIGNPEQKNIQHPTASHQGSKTKGRGSGVRSIIVSPSEAGNGGTQIPEPLFAQTGQGGIVTTVYQDPTIQPTGSYRSVELAKIGKERMINRFVEKPRTSTPVTEFKRGGPGAAAQGQTIQEEGIDGNGASAGSKERSGSLSGATLYAHLSLPQQDSTPANVGIAPQSAISANEIMDLLRGMDARLQHLEQKVDKVLAQGSMVTQIKNELSTVKTTLATIEGMMATVKIMDPGNPTGVPVDELRRSFSDHVTIVSGPGDVSFSSSEKPTLYLDELARPVSKPRPAKQTKSQPVKDLAGQKVMITKMITDCVANPQMKQAFEQRLAKASTEDALNDIKRDIIRSAI.

The N-terminus domain stretch occupies residues 1-194; the sequence is MDQFIKQDET…GSLSGATLYA (194 aa). Phosphothreonine occurs at positions 10, 16, 91, 150, and 165. A Phosphoserine modification is found at Ser188. A multimerization region spans residues 216–279; sequence ISANEIMDLL…MATVKIMDPG (64 aa). The stretch at 218–245 forms a coiled coil; it reads ANEIMDLLRGMDARLQHLEQKVDKVLAQ. The residue at position 250 (Thr250) is a Phosphothreonine. The residue at position 257 (Ser257) is a Phosphoserine. A phosphothreonine mark is found at Thr258 and Thr282. Phosphoserine is present on residues Ser292 and Ser294. At Thr298 the chain carries Phosphothreonine. Phosphoserine occurs at positions 301 and 374. The tract at residues 343 to 391 is interaction with the nucleoprotein; sequence AGQKVMITKMITDCVANPQMKQAFEQRLAKASTEDALNDIKRDIIRSAI. Thr375 is modified (phosphothreonine).

Belongs to the rubulavirus/avulavirus P protein family. As to quaternary structure, homotetramer. Interacts (via multimerization domain) with polymerase L; this interaction forms the polymerase L-P complex. Interacts (via N-terminus) with N0 (via Ncore); this interaction allows P to chaperon N0 to avoid N polymerization before encapsidation. Interacts (via C-terminus) with N-RNA template; this interaction positions the polymerase on the template for both transcription and replication. Interacts with host RPS6KB1 kinase; this interaction may play a role in the viral replication and transcription.

It localises to the virion. Essential cofactor of the RNA polymerase L that plays a central role in the transcription and replication by forming the polymerase complex with RNA polymerase L and recruiting L to the genomic N-RNA template for RNA synthesis. Also plays a central role in the encapsidation of nascent RNA chains by forming the encapsidation complex with the nucleocapsid protein N (N-P complex). Acts as a chaperone for newly synthesized free N protein, so-called N0, allowing encapsidation of nascent RNA chains during replication. The nucleoprotein protein N prevents excessive phosphorylation of P, which leads to down-regulation of viral transcription/ replication. Participates, together with N, in the formation of viral factories (viroplasms), which are large inclusions in the host cytoplasm where replication takes place. This Homo sapiens (Human) protein is Phosphoprotein.